The following is a 271-amino-acid chain: 3-methyl-2-oxobutanoate hydroxymethyltransferase (271 aa).

Mg(2+)-binding residues include aspartate 53 and aspartate 92. 3-methyl-2-oxobutanoate is bound by residues aspartate 53 to serine 54, aspartate 92, and lysine 120. Residue glutamate 122 coordinates Mg(2+). Catalysis depends on glutamate 189, which acts as the Proton acceptor.

Belongs to the PanB family. In terms of assembly, homodecamer; pentamer of dimers. The cofactor is Mg(2+).

It localises to the cytoplasm. It catalyses the reaction 3-methyl-2-oxobutanoate + (6R)-5,10-methylene-5,6,7,8-tetrahydrofolate + H2O = 2-dehydropantoate + (6S)-5,6,7,8-tetrahydrofolate. Its pathway is cofactor biosynthesis; (R)-pantothenate biosynthesis; (R)-pantoate from 3-methyl-2-oxobutanoate: step 1/2. Catalyzes the reversible reaction in which hydroxymethyl group from 5,10-methylenetetrahydrofolate is transferred onto alpha-ketoisovalerate to form ketopantoate. This chain is 3-methyl-2-oxobutanoate hydroxymethyltransferase, found in Burkholderia mallei (strain NCTC 10247).